The chain runs to 230 residues: MKNPMLEVVSLLLEKLLLISNFTLFSSGAAGEDKGRNSFYETSSFHRGDVLEVPRTHLTHYGIYLGDNRVAHMMPDILLALTDDMGRTQKVVSNKRLILGVIVKVASIRVDTVEDFAYGANILVNHLDESLQKKALLNEEVARRAEKLLGFTPYSLLWNNCEHFVTYCRYGTPISPQSDKFCETVKIIIRDQRSVLASAVLGLASIVCTGLVSYTTLPAIFIPFFLWMAG.

The Cytoplasmic portion of the chain corresponds to 1 to 194; the sequence is MKNPMLEVVS…VKIIIRDQRS (194 aa). The LRAT domain maps to 50 to 177; the sequence is VLEVPRTHLT…CRYGTPISPQ (128 aa). Catalysis depends on residues histidine 60 and histidine 72. Cysteine 161 (acyl-thioester intermediate) is an active-site residue. A helical transmembrane segment spans residues 195–215; it reads VLASAVLGLASIVCTGLVSYT. The Lumenal segment spans residues 216 to 230; that stretch reads TLPAIFIPFFLWMAG.

The protein belongs to the H-rev107 family. In terms of tissue distribution, hepatic stellate cells and endothelial cells (at protein level). Found at high levels in testis and liver, followed by retinal pigment epithelium, small intestine, prostate, pancreas and colon. Low expression observed in brain. In fetal tissues, expressed in retinal pigment epithelium and liver, and barely in the brain.

The protein localises to the endoplasmic reticulum membrane. It is found in the rough endoplasmic reticulum. It localises to the endosome. The protein resides in the multivesicular body. Its subcellular location is the cytoplasm. The protein localises to the perinuclear region. The enzyme catalyses all-trans-retinol--[retinol-binding protein] + a 1,2-diacyl-sn-glycero-3-phosphocholine = apo--[retinol-binding protein] + an all-trans-retinyl ester + a 2-acyl-sn-glycero-3-phosphocholine. The catalysed reaction is 1,2-dihexadecanoyl-sn-glycero-3-phosphocholine + all-trans-retinol = all-trans-retinyl hexadecanoate + 2-hexadecanoyl-sn-glycero-3-phosphocholine. It carries out the reaction 1,2-diheptanoyl-sn-glycero-3-phosphocholine + all-trans-retinol--[retinol-binding protein] = all-trans-retinyl heptanoate + 2-heptanoyl-sn-glycero-3-phosphocholine + apo--[retinol-binding protein]. It catalyses the reaction 1,2-dioctanoyl-sn-glycero-3-phosphocholine + all-trans-retinol--[retinol-binding protein] = 2-octanoyl-sn-glycero-3-phosphocholine + all-trans-retinyl octanoate + apo--[retinol-binding protein]. The enzyme catalyses all-trans-retinol--[retinol-binding protein] + 1,2-dihexadecanoyl-sn-glycero-3-phosphocholine = apo--[retinol-binding protein] + all-trans-retinyl hexadecanoate + 2-hexadecanoyl-sn-glycero-3-phosphocholine. The catalysed reaction is 1,2-didodecanoyl-sn-glycero-3-phosphocholine + all-trans-retinol--[retinol-binding protein] = 2-dodecanoyl-sn-glycero-3-phosphocholine + all-trans-retinyl dodecanoate + apo--[retinol-binding protein]. The protein operates within cofactor metabolism; retinol metabolism. Inhibited by all-trans-retinyl alpha-bromoacetate and N-boc-L-biocytinyl-11-aminoundecane chloro-methyl ketone (BACMK). Its function is as follows. Transfers the acyl group from the sn-1 position of phosphatidylcholine to all-trans retinol, producing all-trans retinyl esters. Retinyl esters are storage forms of vitamin A. LRAT plays a critical role in vision. It provides the all-trans retinyl ester substrates for the isomerohydrolase which processes the esters into 11-cis-retinol in the retinal pigment epithelium; due to a membrane-associated alcohol dehydrogenase, 11 cis-retinol is oxidized and converted into 11-cis-retinaldehyde which is the chromophore for rhodopsin and the cone photopigments. Required for the survival of cone photoreceptors and correct rod photoreceptor cell morphology. The sequence is that of Lecithin retinol acyltransferase from Homo sapiens (Human).